The following is a 471-amino-acid chain: WASH complex subunit 1 (471 aa).

The interval 1 to 54 (MTPTGTQHSLAGQTYAVPLIQPDLRREEAIQQVADALQYLQKVSGDIFSRISQR) is required for WASH complex assembly. The WHD1 stretch occupies residues 1 to 167 (MTPTGTQHSL…EGLGGLPSNI (167 aa)). A disordered region spans residues 297–471 (EDGVLTARPP…GEEDEDDWES (175 aa)). The span at 304–336 (RPPPPPPPPPPPAPAVLMSVPPPPPPPQAPPGQ) shows a compositional bias: pro residues. Residues 353–471 (QGAPKEVVDP…GEEDEDDWES (119 aa)) are VCA. The 23-residue stretch at 365-387 (GRATLLESIRQAGGIGKAKLRSV) folds into the WH2 domain. Residues 386–402 (SVKERKLEKKKQKEQEQ) show a composition bias toward basic and acidic residues. Positions 428-442 (SGKGPGSGASEGPGG) are enriched in gly residues. The segment covering 462–471 (GEEDEDDWES) has biased composition (acidic residues).

Belongs to the WASH1 family. In terms of assembly, component of the WASH core complex also described as WASH regulatory complex SHRC composed of WASHC1, WASHC2, WASHC3, WASHC4 and WASHC5. The WASH core complex associates with the F-actin-capping protein dimer (formed by CAPZA1, CAPZA2 or CAPZA3 and CAPZB); the assembly has been initially described as WASH complex. Interacts (via WHD1 region) with WASHC2; the interaction is direct. Interacts with alpha-tubulin. Interacts with BECN1; WASHC1 and AMBRA1 can competitively interact with BECN1. Interacts with BLOC1S2; may associate with the BLOC-1 complex. Interacts with tubulin gamma chain (TUBG1 or TUBG2). Interacts with TBC1D23.

It is found in the early endosome membrane. Its subcellular location is the recycling endosome membrane. It localises to the late endosome. The protein localises to the cytoplasmic vesicle. The protein resides in the autophagosome. It is found in the cytoplasm. Its subcellular location is the cytoskeleton. It localises to the microtubule organizing center. The protein localises to the centrosome. The protein resides in the centriole. In terms of biological role, acts as a component of the WASH core complex that functions as a nucleation-promoting factor (NPF) at the surface of endosomes, where it recruits and activates the Arp2/3 complex to induce actin polymerization, playing a key role in the fission of tubules that serve as transport intermediates during endosome sorting. Involved in endocytic trafficking of EGF. Involved in transferrin receptor recycling. Regulates the trafficking of endosomal alpha5beta1 integrin to the plasma membrane and involved in invasive cell migration. In T-cells involved in endosome-to-membrane recycling of receptors including T-cell receptor (TCR), CD28 and ITGAL; proposed to be implicated in T-cell proliferation and effector function. In dendritic cells involved in endosome-to-membrane recycling of major histocompatibility complex (MHC) class II probably involving retromer and subsequently allowing antigen sampling, loading and presentation during T-cell activation. Involved in negative regulation of autophagy independently from its role in endosomal sorting by inhibiting BECN1 ubiquitination to inactivate PIK3C3/Vps34 activity. This Bos taurus (Bovine) protein is WASH complex subunit 1.